Reading from the N-terminus, the 407-residue chain is Aspartate aminotransferase, cytoplasmic (407 aa).

Gly39, Trp136, and Asn189 together coordinate L-aspartate. Lys253 carries the N6-(pyridoxal phosphate)lysine modification. Arg381 is an L-aspartate binding site.

The protein belongs to the class-I pyridoxal-phosphate-dependent aminotransferase family. As to quaternary structure, homodimer. Pyridoxal 5'-phosphate serves as cofactor.

The protein localises to the cytoplasm. It catalyses the reaction L-aspartate + 2-oxoglutarate = oxaloacetate + L-glutamate. Functionally, important for the metabolism of amino acids and Krebs-cycle related organic acids. In plants, it is involved in nitrogen metabolism and in aspects of carbon and energy metabolism. In Oryza sativa subsp. japonica (Rice), this protein is Aspartate aminotransferase, cytoplasmic.